Consider the following 506-residue polypeptide: (+)-vincadifformine 19-hydroxylase (506 aa).

At 1–4 the chain is on the lumenal side; the sequence is MELD. Residues 5–25 traverse the membrane as a helical segment; that stretch reads ECSPSIFIISFIFIAISIAIL. At 26-506 the chain is on the cytoplasmic side; it reads RRIRPKKTKA…DLHLIPTSYM (481 aa). Residue cysteine 450 coordinates heme.

This sequence belongs to the cytochrome P450 family. Requires heme as cofactor. Accumulates progressively in roots.

It is found in the endoplasmic reticulum membrane. The enzyme catalyses (+)-vincadifformine + reduced [NADPH--hemoprotein reductase] + O2 = (+)-minovincinine + oxidized [NADPH--hemoprotein reductase] + H2O + H(+). It participates in alkaloid biosynthesis. Its activity is regulated as follows. The enantiomer (-)-vincadifformine acts as a competitive inhibitor. Its function is as follows. Component of the monoterpenoid indole alkaloids (MIAs, e.g. echitovenine, tabersonine, lochnericine, 19-hydroxytabersonine and horhammericine) biosynthetic pathway; MIAs are used in cancer treatment and other medical applications. Cytochrome P450 catalyzing the hydroxylation of (+)-vincadifformine to (+)-minovincinine. This chain is (+)-vincadifformine 19-hydroxylase, found in Catharanthus roseus (Madagascar periwinkle).